The sequence spans 414 residues: Methyl-CpG-binding domain protein 2 (414 aa).

The interval Met1–Arg152 is required for interaction with DHX9 and PRMT5. The interval Met1 to Lys163 is disordered. A compositionally biased stretch (basic residues) spans Gly77–Gly95. Gly residues predominate over residues Gln98–Val123. The 69-residue stretch at Glu148–Met216 folds into the MBD domain. Ser184 carries the post-translational modification Phosphoserine. A disordered region spans residues Met217–Thr244. Residues Pro232–Thr244 show a composition bias toward polar residues. Position 410 is a phosphoserine (Ser410).

In terms of assembly, heterodimer with MBD3 (via N-terminus). Component of the MeCP1 complex that contains HDAC1 and HDAC2. Component of the nucleosome remodeling and deacetylase (NuRD) repressor complex, composed of core proteins MTA1, MTA2, MTA3, RBBP4, RBBP7, HDAC1, HDAC2, MBD2, MBD3, and peripherally associated proteins CDK2AP1, CDK2AP2, GATAD2A, GATAD2B, CHD3, CHD4 and CHD5. The exact stoichiometry of the NuRD complex is unknown, and some subunits such as MBD2 and MBD3, GATAD2A and GATAD2B, and CHD3, CHD4 and CHD5 define mutually exclusive NuRD complexes. Interacts with CDK2AP1. Interacts with DHX9. Interacts with DNMT1. Interacts with GATAD2A/p66-alpha. Interacts with GATAD2B/p66-beta. Interacts with GPN1. Interacts with MIZF. Interacts with PRMT5. Interacts with SIN3A. Interacts with SPHK2. Highly expressed in brain, heart, kidney, lung, skeletal muscle, spleen and testis. Detected at lower levels in embryonic stem cells.

It is found in the nucleus. The protein resides in the chromosome. Functionally, binds CpG islands in promoters where the DNA is methylated at position 5 of cytosine within CpG dinucleotides. Binds hemimethylated DNA as well. Recruits histone deacetylases and DNA methyltransferases to chromatin. Acts as a component of the histone deacetylase NuRD complex which participates in the remodeling of chromatin. Acts as transcriptional repressor and plays a role in gene silencing. Functions as a scaffold protein, targeting GATAD2A and GATAD2B to chromatin to promote repression. May enhance the activation of some unmethylated cAMP-responsive promoters. Selectively represses transcription activity of methylated rRNA promoters. This Mus musculus (Mouse) protein is Methyl-CpG-binding domain protein 2.